The sequence spans 172 residues: Myosin regulatory light chain 12B (172 aa).

Over residues 1-16 (MSSKKAKTKTTKKRPQ) the composition is skewed to basic residues. The tract at residues 1–20 (MSSKKAKTKTTKKRPQRATS) is disordered. A Phosphothreonine; by MLCK and ZIPK/DAPK3 modification is found at Thr-19. Ser-20 bears the Phosphoserine; by MLCK and ZIPK/DAPK3 mark. 3 EF-hand domains span residues 29 to 64 (SQIQ…LGKN), 98 to 133 (DPED…MGDR), and 134 to 169 (FTDE…GAKD). Residues Asp-42, Asn-44, Asp-46, and Asp-53 each coordinate Ca(2+).

Myosin is a hexamer of 2 heavy chains and 4 light chains: interacts with myosin heavy chain MYO19. Phosphorylation increases the actin-activated myosin ATPase activity and thereby regulates the contractile activity. It is required to generate the driving force in the migration of the cells but not necessary for localization of myosin-2 at the leading edge. Phosphorylation is reduced following epigallocatechin-3-O-gallate treatment.

Myosin regulatory subunit that plays an important role in regulation of both smooth muscle and nonmuscle cell contractile activity via its phosphorylation. Phosphorylation triggers actin polymerization in vascular smooth muscle. Implicated in cytokinesis, receptor capping, and cell locomotion. The sequence is that of Myosin regulatory light chain 12B (Myl12b) from Rattus norvegicus (Rat).